The following is a 1860-amino-acid chain: Golgi-specific brefeldin A-resistance guanine nucleotide exchange factor 1 (1860 aa).

Residues 1–211 (MVDKNIYIIQ…EPKNYVGTNM (211 aa)) are DCB; DCB:DCB domain and DCB:HUS domain interaction. The interaction with RAB1B stretch occupies residues 1-381 (MVDKNIYIIQ…SVHDMDYVNP (381 aa)). Disordered stretches follow at residues 215–266 (KMRA…GGMP) and 281–372 (AASA…DSAS). Residues 227 to 241 (WKKQKRSPRPPRHMT) are compositionally biased toward basic residues. 3 stretches are compositionally biased toward polar residues: residues 250–262 (PTPN…SNLT), 290–301 (TDSGLEFSSQTT), and 335–351 (DLQQ…SASV). Residues S350 and S353 each carry the phosphoserine modification. Position 508 is a phosphothreonine (T508). The segment at 531–551 (RIPSFVTELYINYDCDYYCSN) is HUS; DCB:HUS domain interaction. Residues 620–631 (TREASNTERTAS) are compositionally biased toward basic and acidic residues. The interval 620-666 (TREASNTERTASDGKAVGMASDIPGLHLPGGGRLPPEHGKSGCSDLE) is disordered. S663 carries the post-translational modification Phosphoserine. Residues 693-883 (ELIEIKNKKK…EDMYHAIKNE (191 aa)) form the SEC7 domain. Residues 887–1371 (MPEEQTGLVR…PSRPGPSPLI (485 aa)) are phosphatidylinositol-phosphate binding; required for translocation to the leading edge and for ARF1 activation upon GPCR signaling. A compositionally biased stretch (low complexity) spans 1285-1297 (QATARADAPDAGA). The disordered stretch occupies residues 1285 to 1336 (QATARADAPDAGAQSDSELPSYHQNDVSLDRGYTSDSEVYTDHGRPGKIHRS). Residues 1298-1311 (QSDSELPSYHQNDV) are compositionally biased toward polar residues. S1299 carries the post-translational modification Phosphoserine. At Y1317 the chain carries Phosphotyrosine. Phosphoserine occurs at positions 1319, 1321, and 1336. T1338 is modified (phosphothreonine; by AMPK). Disordered stretches follow at residues 1351–1371 (GKDD…SPLI), 1431–1484 (CKSQ…DEGV), and 1726–1809 (PMPM…QPPL). The segment covering 1433-1447 (SQEKRGKSHKYDSKG) has biased composition (basic and acidic residues). Residues 1465–1474 (TSSQHASRGG) show a composition bias toward polar residues. Residues S1476, S1774, and S1785 each carry the phosphoserine modification. Residues 1775–1792 (PRAASSSSPGSPVASSPS) are compositionally biased toward low complexity.

Can form homodimers and probably homotetramers. Interacts with COPG1; the interaction is independent of ARF1 activation. Interacts with ARF1, ARF3, ARF4 and ARF5. Interacts with RAB1B (GTP-bound form); required for GBF1 membrane association. Interacts with GGA1, GGA2 and GGA3. Interacts with USO1. Interacts (via SEC7 domain) with PNPLA2 (via C-terminus); the interaction is direct. Interacts with ARMH3. In terms of assembly, (Microbial infection) Interacts with poliovirus protein 3A. AMPK-mediated phosphorylation at Thr-1338 is induced by 2-deoxyglucose (2-DG) and AICA ribonucleotide, and occurs during mitosis leading to membrane disassociation and inactivation of ARF1 during mitosis. In terms of tissue distribution, ubiquitous.

Its subcellular location is the golgi apparatus. It is found in the cis-Golgi network. It localises to the endoplasmic reticulum-Golgi intermediate compartment. The protein resides in the trans-Golgi network. The protein localises to the cytoplasm. Its subcellular location is the lipid droplet. It is found in the membrane. With respect to regulation, inhibited by brefeldin A (BFA). Inhibited by golgicide A (GCA). Its function is as follows. Guanine-nucleotide exchange factor (GEF) for members of the Arf family of small GTPases involved in trafficking in the early secretory pathway; its GEF activity initiates the coating of nascent vesicles via the localized generation of activated ARFs through replacement of GDP with GTP. Recruitment to cis-Golgi membranes requires membrane association of Arf-GDP and can be regulated by ARF1, ARF3, ARF4 and ARF5. Involved in the recruitment of the COPI coat complex to the endoplasmic reticulum exit sites (ERES), and the endoplasmic reticulum-Golgi intermediate (ERGIC) and cis-Golgi compartments which implicates ARF1 activation. Involved in COPI vesicle-dependent retrograde transport from the ERGIC and cis-Golgi compartments to the endoplasmic reticulum (ER). Involved in the trans-Golgi network recruitment of GGA1, GGA2, GGA3, BIG1, BIG2, and the AP-1 adaptor protein complex related to chlathrin-dependent transport; the function requires its GEF activity (probably at least in part on ARF4 and ARF5). Has GEF activity towards ARF1. Has in vitro GEF activity towards ARF5. Involved in the processing of PSAP. Required for the assembly of the Golgi apparatus. The AMPK-phosphorylated form is involved in Golgi disassembly during mitotis and under stress conditions. May be involved in the COPI vesicle-dependent recruitment of PNPLA2 to lipid droplets; however, this function is under debate. In neutrophils, involved in G protein-coupled receptor (GPCR)-mediated chemotaxis und superoxide production. Proposed to be recruited by phosphatidylinositol-phosphates generated upon GPCR stimulation to the leading edge where it recruits and activates ARF1, and is involved in recruitment of GIT2 and the NADPH oxidase complex. Plays a role in maintaining mitochondrial morphology. This is Golgi-specific brefeldin A-resistance guanine nucleotide exchange factor 1 (GBF1) from Homo sapiens (Human).